The primary structure comprises 93 residues: Small ribosomal subunit protein uS15 (93 aa).

Belongs to the universal ribosomal protein uS15 family. In terms of assembly, part of the 30S ribosomal subunit. Forms a bridge to the 50S subunit in the 70S ribosome, contacting the 23S rRNA.

One of the primary rRNA binding proteins, it binds directly to 16S rRNA where it helps nucleate assembly of the platform of the 30S subunit by binding and bridging several RNA helices of the 16S rRNA. Its function is as follows. Forms an intersubunit bridge (bridge B4) with the 23S rRNA of the 50S subunit in the ribosome. The protein is Small ribosomal subunit protein uS15 of Ehrlichia ruminantium (strain Gardel).